The sequence spans 565 residues: Proline--tRNA ligase (565 aa).

This sequence belongs to the class-II aminoacyl-tRNA synthetase family. ProS type 1 subfamily. In terms of assembly, homodimer.

The protein resides in the cytoplasm. The catalysed reaction is tRNA(Pro) + L-proline + ATP = L-prolyl-tRNA(Pro) + AMP + diphosphate. Functionally, catalyzes the attachment of proline to tRNA(Pro) in a two-step reaction: proline is first activated by ATP to form Pro-AMP and then transferred to the acceptor end of tRNA(Pro). As ProRS can inadvertently accommodate and process non-cognate amino acids such as alanine and cysteine, to avoid such errors it has two additional distinct editing activities against alanine. One activity is designated as 'pretransfer' editing and involves the tRNA(Pro)-independent hydrolysis of activated Ala-AMP. The other activity is designated 'posttransfer' editing and involves deacylation of mischarged Ala-tRNA(Pro). The misacylated Cys-tRNA(Pro) is not edited by ProRS. In Lactobacillus johnsonii (strain CNCM I-12250 / La1 / NCC 533), this protein is Proline--tRNA ligase.